The primary structure comprises 292 residues: 32 kDa protein (292 aa).

May be involved in transmission by vector nematode species. The protein is 32 kDa protein of Bidens pilosa (Hairy beggarticks).